The sequence spans 349 residues: Divinyl chlorophyll a/b light-harvesting protein PcbE (349 aa).

6 consecutive transmembrane segments (helical) span residues 27–47, 65–85, 88–108, 201–221, 241–261, and 308–328; these read FIAA…GSTL, IFLA…AWTG, VASI…GGLL, VLGG…FHIA, AILS…AFWC, and LANV…WHAL.

Belongs to the PsbB/PsbC family. IsiA/Pcb subfamily. As to quaternary structure, the antenna complex consists of divinyl chlorophylls (a and b) and divinyl chlorophyll a/b binding proteins and binds more divinyl chlorophyll b than does the antenna complex from high-light-adapted Prochlorococcus. The cofactor is divinyl chlorophyll a. Requires divinyl chlorophyll b as cofactor.

The protein resides in the cellular thylakoid membrane. Its function is as follows. The antenna complex functions as a light receptor, it captures and delivers excitation energy to photosystems II and I. The Prochlorales pcb genes are not related to higher plant LHCs. The polypeptide is Divinyl chlorophyll a/b light-harvesting protein PcbE (pcbE) (Prochlorococcus marinus (strain NATL2A)).